A 436-amino-acid polypeptide reads, in one-letter code: 3-ketoacyl-CoA thiolase (436 aa).

Cys99 functions as the Acyl-thioester intermediate in the catalytic mechanism. Residues His392 and Cys422 each act as proton acceptor in the active site.

The protein belongs to the thiolase-like superfamily. Thiolase family. In terms of assembly, heterotetramer of two alpha chains (FadJ) and two beta chains (FadI).

It localises to the cytoplasm. It catalyses the reaction an acyl-CoA + acetyl-CoA = a 3-oxoacyl-CoA + CoA. Its pathway is lipid metabolism; fatty acid beta-oxidation. Its function is as follows. Catalyzes the final step of fatty acid oxidation in which acetyl-CoA is released and the CoA ester of a fatty acid two carbons shorter is formed. The chain is 3-ketoacyl-CoA thiolase from Salmonella typhi.